The chain runs to 359 residues: DNA replication and repair protein RecF (359 aa).

An ATP-binding site is contributed by 30 to 37 (GNNGSGKT).

This sequence belongs to the RecF family.

It localises to the cytoplasm. In terms of biological role, the RecF protein is involved in DNA metabolism; it is required for DNA replication and normal SOS inducibility. RecF binds preferentially to single-stranded, linear DNA. It also seems to bind ATP. The polypeptide is DNA replication and repair protein RecF (Haemophilus influenzae (strain 86-028NP)).